The sequence spans 275 residues: Light-independent protochlorophyllide reductase iron-sulfur ATP-binding protein (275 aa).

ATP contacts are provided by residues 12–17 (GIGKST) and Lys41. Ser16 contacts Mg(2+). [4Fe-4S] cluster-binding residues include Cys97 and Cys131. 182–183 (NR) provides a ligand contact to ATP.

It belongs to the NifH/BchL/ChlL family. Homodimer. Protochlorophyllide reductase is composed of three subunits; BchL, BchN and BchB. Requires [4Fe-4S] cluster as cofactor.

It carries out the reaction chlorophyllide a + oxidized 2[4Fe-4S]-[ferredoxin] + 2 ADP + 2 phosphate = protochlorophyllide a + reduced 2[4Fe-4S]-[ferredoxin] + 2 ATP + 2 H2O. The protein operates within porphyrin-containing compound metabolism; bacteriochlorophyll biosynthesis (light-independent). In terms of biological role, component of the dark-operative protochlorophyllide reductase (DPOR) that uses Mg-ATP and reduced ferredoxin to reduce ring D of protochlorophyllide (Pchlide) to form chlorophyllide a (Chlide). This reaction is light-independent. The L component serves as a unique electron donor to the NB-component of the complex, and binds Mg-ATP. This is Light-independent protochlorophyllide reductase iron-sulfur ATP-binding protein from Pelodictyon phaeoclathratiforme (strain DSM 5477 / BU-1).